Here is a 173-residue protein sequence, read N- to C-terminus: Ribosome maturation factor RimM (173 aa).

A PRC barrel domain is found at 95 to 173; that stretch reads EGEYYWRQLE…LMVVDWDPDF (79 aa).

It belongs to the RimM family. Binds ribosomal protein uS19.

It is found in the cytoplasm. Its function is as follows. An accessory protein needed during the final step in the assembly of 30S ribosomal subunit, possibly for assembly of the head region. Essential for efficient processing of 16S rRNA. May be needed both before and after RbfA during the maturation of 16S rRNA. It has affinity for free ribosomal 30S subunits but not for 70S ribosomes. This chain is Ribosome maturation factor RimM, found in Hahella chejuensis (strain KCTC 2396).